The chain runs to 379 residues: Cytochrome b (379 aa).

The next 4 membrane-spanning stretches (helical) occupy residues 33–53 (FGSLLGACLTIQIITGLFLAM), 77–98 (WTIRYLHANGASVFFLCLFIHV), 113–133 (WNVGIILLFSVMATAFMGYVL), and 178–198 (FFALHFVLPFVILALVMIHLL). Positions 83 and 97 each coordinate heme b. Residues histidine 182 and histidine 196 each coordinate heme b. Histidine 201 is an a ubiquinone binding site. Transmembrane regions (helical) follow at residues 226–246 (TKDFLGLLLLILLLMVLTLFY), 288–308 (LGGVMALILSILILAIIPLLQ), 320–340 (LSQFLFWILVADLLTLTWIGG), and 347–367 (FITIGQVASILYFLLMVLIMP).

The protein belongs to the cytochrome b family. As to quaternary structure, the cytochrome bc1 complex contains 11 subunits: 3 respiratory subunits (MT-CYB, CYC1 and UQCRFS1), 2 core proteins (UQCRC1 and UQCRC2) and 6 low-molecular weight proteins (UQCRH/QCR6, UQCRB/QCR7, UQCRQ/QCR8, UQCR10/QCR9, UQCR11/QCR10 and a cleavage product of UQCRFS1). This cytochrome bc1 complex then forms a dimer. Heme b serves as cofactor.

Its subcellular location is the mitochondrion inner membrane. Functionally, component of the ubiquinol-cytochrome c reductase complex (complex III or cytochrome b-c1 complex) that is part of the mitochondrial respiratory chain. The b-c1 complex mediates electron transfer from ubiquinol to cytochrome c. Contributes to the generation of a proton gradient across the mitochondrial membrane that is then used for ATP synthesis. This is Cytochrome b (MT-CYB) from Lepilemur edwardsi (Milne-Edwards's sportive lemur).